The following is a 118-amino-acid chain: Hydrogenase maturation factor HypA (118 aa).

His2 is a Ni(2+) binding site. 4 residues coordinate Zn(2+): Cys73, Cys76, Cys90, and Cys93.

The protein belongs to the HypA/HybF family.

Functionally, involved in the maturation of [NiFe] hydrogenases. Required for nickel insertion into the metal center of the hydrogenase. In Salmonella typhi, this protein is Hydrogenase maturation factor HypA.